The chain runs to 43 residues: Protein PsbN 1 (43 aa).

Residues 3-23 (TATILGILIAAAVVGITVLAL) traverse the membrane as a helical segment.

The protein belongs to the PsbN family.

The protein localises to the cellular thylakoid membrane. Functionally, may play a role in photosystem I and II biogenesis. This Microcystis aeruginosa (strain NIES-843 / IAM M-2473) protein is Protein PsbN 1.